Reading from the N-terminus, the 76-residue chain is Large ribosomal subunit protein eL20 (76 aa).

It belongs to the eukaryotic ribosomal protein eL20 family. Part of the 50S ribosomal subunit. Binds 23S rRNA.

The sequence is that of Large ribosomal subunit protein eL20 from Methanococcus maripaludis (strain C7 / ATCC BAA-1331).